Reading from the N-terminus, the 276-residue chain is Diaminopimelate epimerase (276 aa).

Residues Asn-13, Gln-46, and Asn-66 each contribute to the substrate site. The Proton donor role is filled by Cys-75. Substrate is bound by residues 76 to 77 (GN), Asn-159, Asn-192, and 210 to 211 (ER). The Proton acceptor role is filled by Cys-219. 220–221 (GT) is a substrate binding site.

The protein belongs to the diaminopimelate epimerase family. Homodimer.

The protein resides in the cytoplasm. The catalysed reaction is (2S,6S)-2,6-diaminopimelate = meso-2,6-diaminopimelate. Its pathway is amino-acid biosynthesis; L-lysine biosynthesis via DAP pathway; DL-2,6-diaminopimelate from LL-2,6-diaminopimelate: step 1/1. In terms of biological role, catalyzes the stereoinversion of LL-2,6-diaminopimelate (L,L-DAP) to meso-diaminopimelate (meso-DAP), a precursor of L-lysine and an essential component of the bacterial peptidoglycan. The sequence is that of Diaminopimelate epimerase from Chromobacterium violaceum (strain ATCC 12472 / DSM 30191 / JCM 1249 / CCUG 213 / NBRC 12614 / NCIMB 9131 / NCTC 9757 / MK).